The sequence spans 259 residues: Imidazole glycerol phosphate synthase subunit HisF (259 aa).

Active-site residues include Asp-11 and Asp-130.

Belongs to the HisA/HisF family. Heterodimer of HisH and HisF.

Its subcellular location is the cytoplasm. The catalysed reaction is 5-[(5-phospho-1-deoxy-D-ribulos-1-ylimino)methylamino]-1-(5-phospho-beta-D-ribosyl)imidazole-4-carboxamide + L-glutamine = D-erythro-1-(imidazol-4-yl)glycerol 3-phosphate + 5-amino-1-(5-phospho-beta-D-ribosyl)imidazole-4-carboxamide + L-glutamate + H(+). The protein operates within amino-acid biosynthesis; L-histidine biosynthesis; L-histidine from 5-phospho-alpha-D-ribose 1-diphosphate: step 5/9. In terms of biological role, IGPS catalyzes the conversion of PRFAR and glutamine to IGP, AICAR and glutamate. The HisF subunit catalyzes the cyclization activity that produces IGP and AICAR from PRFAR using the ammonia provided by the HisH subunit. The chain is Imidazole glycerol phosphate synthase subunit HisF from Variovorax paradoxus (strain S110).